Here is a 182-residue protein sequence, read N- to C-terminus: ATP synthase subunit delta (182 aa).

It belongs to the ATPase delta chain family. F-type ATPases have 2 components, F(1) - the catalytic core - and F(0) - the membrane proton channel. F(1) has five subunits: alpha(3), beta(3), gamma(1), delta(1), epsilon(1). CF(0) has four main subunits: a(1), b(1), b'(1) and c(10-14). The alpha and beta chains form an alternating ring which encloses part of the gamma chain. F(1) is attached to F(0) by a central stalk formed by the gamma and epsilon chains, while a peripheral stalk is formed by the delta, b and b' chains.

Its subcellular location is the cellular thylakoid membrane. In terms of biological role, f(1)F(0) ATP synthase produces ATP from ADP in the presence of a proton or sodium gradient. F-type ATPases consist of two structural domains, F(1) containing the extramembraneous catalytic core and F(0) containing the membrane proton channel, linked together by a central stalk and a peripheral stalk. During catalysis, ATP synthesis in the catalytic domain of F(1) is coupled via a rotary mechanism of the central stalk subunits to proton translocation. This protein is part of the stalk that links CF(0) to CF(1). It either transmits conformational changes from CF(0) to CF(1) or is implicated in proton conduction. This is ATP synthase subunit delta from Parasynechococcus marenigrum (strain WH8102).